The chain runs to 951 residues: Exportin-2 (951 aa).

Positions 29-104 (ATSKIQKFVK…KSLLLNFILS (76 aa)) constitute an Importin N-terminal domain.

Belongs to the XPO2/CSE1 family.

The protein localises to the cytoplasm. It is found in the nucleus. Export receptor for importin alpha. Mediates importin-alpha re-export from the nucleus to the cytoplasm after import substrates have been released into the nucleoplasm. The chain is Exportin-2 (xpo2) from Dictyostelium discoideum (Social amoeba).